A 455-amino-acid polypeptide reads, in one-letter code: Bifunctional protein GlmU (455 aa).

Residues 1 to 227 (MLTDIVILAA…ATEALGVNDP (227 aa)) form a pyrophosphorylase region. UDP-N-acetyl-alpha-D-glucosamine contacts are provided by residues 8-11 (LAAG), K22, Q73, 78-79 (GT), 100-102 (YGD), G137, E152, N167, and N225. Residue D102 coordinates Mg(2+). N225 is a Mg(2+) binding site. Residues 228–248 (VQLAILERVFQRQQLRALQMQ) are linker. The segment at 249 to 455 (GLRVADPARV…HWQRPRRDKK (207 aa)) is N-acetyltransferase. Positions 331 and 349 each coordinate UDP-N-acetyl-alpha-D-glucosamine. H361 (proton acceptor) is an active-site residue. UDP-N-acetyl-alpha-D-glucosamine-binding residues include Y364 and N375. Acetyl-CoA-binding positions include A378, 384-385 (NY), S403, A421, and R438. Residues 420–455 (GAGSTITKEVPPGGLTLSRSPQRTIPHWQRPRRDKK) form a disordered region.

In the N-terminal section; belongs to the N-acetylglucosamine-1-phosphate uridyltransferase family. The protein in the C-terminal section; belongs to the transferase hexapeptide repeat family. In terms of assembly, homotrimer. Mg(2+) is required as a cofactor.

It localises to the cytoplasm. It carries out the reaction alpha-D-glucosamine 1-phosphate + acetyl-CoA = N-acetyl-alpha-D-glucosamine 1-phosphate + CoA + H(+). The catalysed reaction is N-acetyl-alpha-D-glucosamine 1-phosphate + UTP + H(+) = UDP-N-acetyl-alpha-D-glucosamine + diphosphate. It functions in the pathway nucleotide-sugar biosynthesis; UDP-N-acetyl-alpha-D-glucosamine biosynthesis; N-acetyl-alpha-D-glucosamine 1-phosphate from alpha-D-glucosamine 6-phosphate (route II): step 2/2. Its pathway is nucleotide-sugar biosynthesis; UDP-N-acetyl-alpha-D-glucosamine biosynthesis; UDP-N-acetyl-alpha-D-glucosamine from N-acetyl-alpha-D-glucosamine 1-phosphate: step 1/1. It participates in bacterial outer membrane biogenesis; LPS lipid A biosynthesis. Its function is as follows. Catalyzes the last two sequential reactions in the de novo biosynthetic pathway for UDP-N-acetylglucosamine (UDP-GlcNAc). The C-terminal domain catalyzes the transfer of acetyl group from acetyl coenzyme A to glucosamine-1-phosphate (GlcN-1-P) to produce N-acetylglucosamine-1-phosphate (GlcNAc-1-P), which is converted into UDP-GlcNAc by the transfer of uridine 5-monophosphate (from uridine 5-triphosphate), a reaction catalyzed by the N-terminal domain. The protein is Bifunctional protein GlmU of Acidithiobacillus ferrooxidans (strain ATCC 23270 / DSM 14882 / CIP 104768 / NCIMB 8455) (Ferrobacillus ferrooxidans (strain ATCC 23270)).